Consider the following 144-residue polypeptide: Large ribosomal subunit protein uL24 (144 aa).

Residues 102–144 (NIVVEKPEPEPEPRKEETAEAQEAKEEAVAEEKTEVDDNDKQN) form a disordered region. Residues 103-134 (IVVEKPEPEPEPRKEETAEAQEAKEEAVAEEK) show a composition bias toward basic and acidic residues. Residues 135–144 (TEVDDNDKQN) show a composition bias toward acidic residues.

It belongs to the universal ribosomal protein uL24 family. In terms of assembly, part of the 50S ribosomal subunit.

Its function is as follows. One of two assembly initiator proteins, it binds directly to the 5'-end of the 23S rRNA, where it nucleates assembly of the 50S subunit. Functionally, located at the polypeptide exit tunnel on the outside of the subunit. In Thermoplasma acidophilum (strain ATCC 25905 / DSM 1728 / JCM 9062 / NBRC 15155 / AMRC-C165), this protein is Large ribosomal subunit protein uL24 (rpl24).